Reading from the N-terminus, the 104-residue chain is Alpha-amylase inhibitor HOE-467A (104 aa).

The first 30 residues, 1-30 (MRVRALRLAALVGAGAALALSPLAAGPASA), serve as a signal peptide directing secretion. Intrachain disulfides connect Cys41–Cys57 and Cys75–Cys103.

Its function is as follows. Inhibits mammalian alpha-amylases specifically but has no action on plant and microbial alpha-amylases. Forms a tight stoichiometric 1:1 complex with alpha-amylase. This is Alpha-amylase inhibitor HOE-467A from Streptomyces tendae.